Reading from the N-terminus, the 237-residue chain is LexA repressor (237 aa).

A DNA-binding region (H-T-H motif) is located at residues 26-46 (FDEMKIALELTSKSGIHRLIT). Active-site for autocatalytic cleavage activity residues include serine 158 and lysine 196.

This sequence belongs to the peptidase S24 family. Homodimer.

It carries out the reaction Hydrolysis of Ala-|-Gly bond in repressor LexA.. Functionally, represses a number of genes involved in the response to DNA damage (SOS response), including recA and lexA. In the presence of single-stranded DNA, RecA interacts with LexA causing an autocatalytic cleavage which disrupts the DNA-binding part of LexA, leading to derepression of the SOS regulon and eventually DNA repair. This chain is LexA repressor, found in Bartonella quintana (strain Toulouse) (Rochalimaea quintana).